We begin with the raw amino-acid sequence, 156 residues long: Small ribosomal subunit protein uS7 (156 aa).

Belongs to the universal ribosomal protein uS7 family. In terms of assembly, part of the 30S ribosomal subunit. Contacts proteins S9 and S11.

In terms of biological role, one of the primary rRNA binding proteins, it binds directly to 16S rRNA where it nucleates assembly of the head domain of the 30S subunit. Is located at the subunit interface close to the decoding center, probably blocks exit of the E-site tRNA. This Mycobacterium sp. (strain JLS) protein is Small ribosomal subunit protein uS7.